The primary structure comprises 511 residues: MRIGPVELSAVKDWDPAPGVLVSWHPTPASCAKALAAPVSAVPPSYVQARQIRSFSEQAARGLDHSRLLIASVEVFGHCDLRAMTYVINAHLRRHDTYRSWFELRDTDHIVRHSIADPADIEFVPTTHGEMTSADLRQHIVATPDSLHWDCFSFGVIQRADSFTFYASIDHLHADGQFVGVGLMEFQSMYTALIMGEPPIGLSEAGSYVDFCVRQHEYTSALTVDSPEVRAWIDFAEINNGTFPEFPLPLGDPSVRCGGDLLSMMLMDEQQTQRFESACMAANARFIGGMLACIAIAIHELTGADTYFGITPKDIRTPADLMTQGWFTGQIPVTVPVAGLSFNEIARIAQTSFDTGADLAKVPFERVVELSPSLRRPQPLFSLVNFFDAQVGPLSAVTKLFEGLNVGTYSDGRVTYPLSTMVGRFDETAASVLFPDNPVARESVTAYLRAIRSVCMRIANGGTAERVGNVVALSPGRRNNIERMTWRSCRAGDFIDICNLKVANVTVDREA.

The protein belongs to the PapA acyltransferase family.

The catalysed reaction is a (hydroxy)phthioceranyl-[(hydroxy)phthioceranic acid synthase] + 2'-palmitoyl/stearoyl-2-O-sulfo-alpha,alpha-trehalose = a 3'-(hydroxy)phthioceranyl-2'-palmitoyl/stearoyl-2-O-sulfo-alpha,alpha-trehalose + holo-[(hydroxy)phthioceranic acid synthase].. Functionally, catalyzes the acylation of trehalose-2-sulfate-2'-palmitate (SL659) by adding the (hydroxy)phthioceranoyl group at the 3'-position to yield the diacylated intermediate 2-palmitoyl-3-(C43)-phthioceranyl-alpha, alpha'-D-trehalose-2'-sulfate (SL1278). This Mycobacterium bovis (strain BCG / Pasteur 1173P2) protein is 2'-acyl-2-O-sulfo-trehalose (hydroxy)phthioceranyltransferase PapA1 (papA1).